Consider the following 200-residue polypeptide: Large ribosomal subunit protein uL4 (200 aa).

Positions 42 to 65 (TRAQKTRSEVSGGGAKPWRQKGTG) are disordered.

The protein belongs to the universal ribosomal protein uL4 family. In terms of assembly, part of the 50S ribosomal subunit.

One of the primary rRNA binding proteins, this protein initially binds near the 5'-end of the 23S rRNA. It is important during the early stages of 50S assembly. It makes multiple contacts with different domains of the 23S rRNA in the assembled 50S subunit and ribosome. Its function is as follows. Forms part of the polypeptide exit tunnel. The protein is Large ribosomal subunit protein uL4 of Vibrio atlanticus (strain LGP32) (Vibrio splendidus (strain Mel32)).